We begin with the raw amino-acid sequence, 429 residues long: Enolase (429 aa).

A (2R)-2-phosphoglycerate-binding site is contributed by glutamine 162. Catalysis depends on glutamate 204, which acts as the Proton donor. 3 residues coordinate Mg(2+): aspartate 241, glutamate 286, and aspartate 313. Residues lysine 338, arginine 367, serine 368, and lysine 389 each coordinate (2R)-2-phosphoglycerate. Lysine 338 serves as the catalytic Proton acceptor.

It belongs to the enolase family. The cofactor is Mg(2+).

The protein resides in the cytoplasm. It is found in the secreted. The protein localises to the cell surface. The catalysed reaction is (2R)-2-phosphoglycerate = phosphoenolpyruvate + H2O. It functions in the pathway carbohydrate degradation; glycolysis; pyruvate from D-glyceraldehyde 3-phosphate: step 4/5. Functionally, catalyzes the reversible conversion of 2-phosphoglycerate (2-PG) into phosphoenolpyruvate (PEP). It is essential for the degradation of carbohydrates via glycolysis. The chain is Enolase from Halalkalibacterium halodurans (strain ATCC BAA-125 / DSM 18197 / FERM 7344 / JCM 9153 / C-125) (Bacillus halodurans).